Here is a 763-residue protein sequence, read N- to C-terminus: Protein translocase subunit SecA 2 (763 aa).

ATP is bound by residues Gln-83, 101-105 (GEGKT), and Asp-490.

Belongs to the SecA family. Monomer and homodimer. Part of the essential Sec protein translocation apparatus which comprises SecA, SecYEG and auxiliary proteins SecDF. Other proteins may also be involved.

It localises to the cell membrane. The protein resides in the cytoplasm. The enzyme catalyses ATP + H2O + cellular proteinSide 1 = ADP + phosphate + cellular proteinSide 2.. In terms of biological role, part of the Sec protein translocase complex. Interacts with the SecYEG preprotein conducting channel. Has a central role in coupling the hydrolysis of ATP to the transfer of proteins into and across the cell membrane, serving as an ATP-driven molecular motor driving the stepwise translocation of polypeptide chains across the membrane. This is Protein translocase subunit SecA 2 from Corynebacterium efficiens (strain DSM 44549 / YS-314 / AJ 12310 / JCM 11189 / NBRC 100395).